We begin with the raw amino-acid sequence, 428 residues long: Putative heme-binding peroxidase (428 aa).

Residues 1–33 (MTAIQKPVVAKREAPKAEVNPTVSRSTQTETIK) form a disordered region. Polar residues predominate over residues 21 to 32 (PTVSRSTQTETI). Catalysis depends on H188, which acts as the Proton acceptor. A heme b-binding site is contributed by H312. W328 acts as the Tryptophan radical intermediate in catalysis.

Belongs to the peroxidase family. Cytochrome c peroxidase subfamily. Requires heme b as cofactor.

Functionally, destroys radicals which are normally produced within the cells and which are toxic to biological systems. This chain is Putative heme-binding peroxidase, found in Debaryomyces hansenii (strain ATCC 36239 / CBS 767 / BCRC 21394 / JCM 1990 / NBRC 0083 / IGC 2968) (Yeast).